We begin with the raw amino-acid sequence, 122 residues long: Succinate dehydrogenase assembly factor 3, mitochondrial (122 aa).

The transit peptide at 1–47 directs the protein to the mitochondrion; that stretch reads MHPSVVRLVKPRRPERITSPILPPLPLYRAILRAHHRKLPQELRYLG.

It belongs to the complex I LYR family. SDHAF3 subfamily. Interacts with the iron-sulfur protein subunit within the SDH catalytic dimer.

It localises to the mitochondrion matrix. Functionally, plays an essential role in the assembly of succinate dehydrogenase (SDH), an enzyme complex (also referred to as respiratory complex II) that is a component of both the tricarboxylic acid (TCA) cycle and the mitochondrial electron transport chain, and which couples the oxidation of succinate to fumarate with the reduction of ubiquinone (coenzyme Q) to ubiquinol. Promotes maturation of the iron-sulfur protein subunit of the SDH catalytic dimer, protecting it from the deleterious effects of oxidants. May act together with SDHAF1. This is Succinate dehydrogenase assembly factor 3, mitochondrial from Candida albicans (strain SC5314 / ATCC MYA-2876) (Yeast).